Here is a 736-residue protein sequence, read N- to C-terminus: Epithelial splicing regulatory protein 2 (736 aa).

RRM domains lie at 224-301 (TVIR…KATG), 325-405 (MIIR…RSTA), and 659-736 (ALVR…ACCE).

Belongs to the ESRP family.

The protein localises to the nucleus. In terms of biological role, mRNA splicing factor that regulates the formation of epithelial cell-specific isoforms. Specifically regulates the expression of FGFR2-IIIb, an epithelial cell-specific isoform of fgfr2. Acts by directly binding specific sequences in mRNAs. Binds the GU-rich sequence motifs in the ISE/ISS-3, a cis-element regulatory region present in the mRNA of fgfr2. This chain is Epithelial splicing regulatory protein 2 (esrp2), found in Danio rerio (Zebrafish).